The following is a 501-amino-acid chain: Glycosyltransferase family 92 protein F13G3.3 (501 aa).

The chain crosses the membrane as a helical span at residues 10–30 (LSVVLLFSFLFFVTAVLLQFI). Residues 151-439 (KPVVMCISPL…ISDCYKQSYY (289 aa)) form the GT92 domain.

Belongs to the glycosyltransferase 92 family.

Its subcellular location is the membrane. This chain is Glycosyltransferase family 92 protein F13G3.3, found in Caenorhabditis elegans.